A 481-amino-acid chain; its full sequence is MNILRRGRLGSNVKEDVMKFTTSLEFDKEIFESDILCDIAHTTMLVEQNVISEENGKKIIAELKKIAKRGMENLDLDPSLDDIHMVIESELIKELGEDVAGRMHTGRSRNDEVATDLRLSLRKKVLEIIGHLITMEKNMLTVSDAHKETLTVGYTHLQQAQPVTFGHQILSHVSAIERDISRFFDTYNRINISPLGCGAMATTGFNLNRKRTKDLLGFYGIIENSMDGVSSRDFIVETMANISMLGTNLSKICEELVVFSSAEFNTIEIANEYTSTSSIMPQKKNPDVAEITRAKLSTLNGELVTVLTIMKALPNTYNRDLQEISPHLWKSVYTLIDSIQMVDGMISTVKVNKERMKENAEKNYSTATELADTLVRECGIAFRMAHGIVGELVKRSIEEKVEIKEIISEVLEKNNLSLSQEKIDTALDPFENVKLRNVIGGPAPEEVERAISSFNEKISAHKDKLDEKISEIKTAEKNLLE.

The protein belongs to the lyase 1 family. Argininosuccinate lyase subfamily.

Its subcellular location is the cytoplasm. The enzyme catalyses 2-(N(omega)-L-arginino)succinate = fumarate + L-arginine. It participates in amino-acid biosynthesis; L-arginine biosynthesis; L-arginine from L-ornithine and carbamoyl phosphate: step 3/3. This chain is Argininosuccinate lyase, found in Methanococcus maripaludis (strain DSM 14266 / JCM 13030 / NBRC 101832 / S2 / LL).